The chain runs to 86 residues: U15-lycotoxin-Ls1d (86 aa).

The signal sequence occupies residues 1 to 20 (MNSKIFAVLLLLAFLSCVLS). The region spanning 21–66 (DQYCPKSSITACKKMNIRNDCCKDDDCTGGSWCCATPCGNFCKYPT) is the WAP domain. 5 disulfides stabilise this stretch: Cys24–Cys54, Cys32–Cys58, Cys41–Cys53, Cys42–Cys80, and Cys47–Cys62.

The protein belongs to the venom protein 11 family. 01 (wap-1) subfamily. In terms of processing, contains 5 disulfide bonds. In terms of tissue distribution, expressed by the venom gland.

The protein localises to the secreted. Has antibacterial activity. This is U15-lycotoxin-Ls1d from Lycosa singoriensis (Wolf spider).